The primary structure comprises 383 residues: MRILVDENIPLADEFFGELGDITRLPGRDIDAAAVREQDLLVVRSITRVDAALLEGSRVRFVGTCTIGTDHVDLDYLREAGIGFANAPGCNADSVVDYVLSSLLLLAEEDGFHLAGKTIGIVGVGNVGSRLAERLDDLDVECLLCDPPRAEAEGREDFLSLDALLERAEIVCLHTPLVTEGEHATRHLLDASRIDALAPGTVLINAGRGACVDNQALRERLQRANDLRVVLDVWENEPGIDPALYDLVDIATPHIAGHSIDGKMRGTELVYQAAMRQFGLPARKKLGQLKPDPWLRKIVLTPWAPPLEALSLCTRACYDVRRDMLAFDRYRRRMGMATGFDAYRAEYPLRREFSTLRVELKQNKGGLRDALEGFGFKVKLSSK.

Residues S45 and T66 each contribute to the substrate site. NAD(+) is bound by residues D146 and T175. Residue R208 is part of the active site. D232 is an NAD(+) binding site. The active site involves E237. Residue H254 is the Proton donor of the active site. An NAD(+)-binding site is contributed by G257.

It belongs to the D-isomer specific 2-hydroxyacid dehydrogenase family. PdxB subfamily. In terms of assembly, homodimer.

It localises to the cytoplasm. The enzyme catalyses 4-phospho-D-erythronate + NAD(+) = (R)-3-hydroxy-2-oxo-4-phosphooxybutanoate + NADH + H(+). It participates in cofactor biosynthesis; pyridoxine 5'-phosphate biosynthesis; pyridoxine 5'-phosphate from D-erythrose 4-phosphate: step 2/5. In terms of biological role, catalyzes the oxidation of erythronate-4-phosphate to 3-hydroxy-2-oxo-4-phosphonooxybutanoate. The polypeptide is Erythronate-4-phosphate dehydrogenase (Chromohalobacter salexigens (strain ATCC BAA-138 / DSM 3043 / CIP 106854 / NCIMB 13768 / 1H11)).